The chain runs to 486 residues: MAQLNQNFIDTITQELPAHLSMDDFIAACDRPLRRSIRVNTLKISADDFKTLMQPKGWTFDPIPWCKDGFWISYDEEEQLGNALEHIQGLFYIQEASSMLPPTALFTPSAFTPSAKWQCVLDLASAPGSKTTQIAALMHNSGLLIANEYSASRVKVLHANVLRMGASHCALTHFDGRVFGEYLYESFDAVLIDAPCGGEGTVRKDADALKHWSLNDVLAISETQKALIESAFLALKPGGSLVYSTCTLNRLENQGVCEYLKQTYGDAVQFESLSDLFEGAERATTPEGFLHVWPQIYDSEGFFVAKLTKTASVPRLQPEPTLQKNFPFTPATTKQAQGIKDYFQQDLGISLPDDLIMVRDDEFWLFPHEFRDFIGRMRFQRIGIKLADSTKHGFKVRHEAIIALAGKQLSPTAKTVDLSDVEAKEYLMGRDISLNTAVKAQGEVIVCYGGAPLGMAKHLGNRLKNNLPRDLVKDKVLLLSEQIKSL.

S-adenosyl-L-methionine-binding positions include 124 to 130 (ASAPGSK), Glu148, Asp175, and Asp193. Cys246 (nucleophile) is an active-site residue.

This sequence belongs to the class I-like SAM-binding methyltransferase superfamily. RsmB/NOP family.

The protein localises to the cytoplasm. The enzyme catalyses cytidine(1407) in 16S rRNA + S-adenosyl-L-methionine = 5-methylcytidine(1407) in 16S rRNA + S-adenosyl-L-homocysteine + H(+). Functionally, specifically methylates the cytosine at position 1407 (m5C1407) of 16S rRNA. The chain is Ribosomal RNA small subunit methyltransferase F from Shewanella putrefaciens (strain CN-32 / ATCC BAA-453).